A 115-amino-acid chain; its full sequence is Large ribosomal subunit protein bL19 (115 aa).

This sequence belongs to the bacterial ribosomal protein bL19 family.

In terms of biological role, this protein is located at the 30S-50S ribosomal subunit interface and may play a role in the structure and function of the aminoacyl-tRNA binding site. In Streptococcus pneumoniae (strain JJA), this protein is Large ribosomal subunit protein bL19.